We begin with the raw amino-acid sequence, 712 residues long: Transcriptional regulator GZF3 (712 aa).

Positions 1–13 (MSMSDIQQRPQIP) are enriched in polar residues. Disordered stretches follow at residues 1 to 20 (MSMS…TAAV), 27 to 135 (NVNT…GPVC), 173 to 280 (SLKT…HHHL), 377 to 533 (DVSS…GNNF), and 596 to 712 (LNNN…KVKI). Composition is skewed to low complexity over residues 27–84 (NVNT…EQSS) and 107–131 (PKTG…ISMS). Residues 135–159 (CGNCQTQTTPLWRRDETGQVLCNAC) form a GATA-type zinc finger. The segment covering 186–199 (KQNGSNSQSSKSSG) has biased composition (low complexity). Basic residues predominate over residues 213-223 (GKKSPKSKKKS). A compositionally biased stretch (polar residues) spans 246–261 (ATSNNTPTFKSTTSQS). The segment covering 268 to 280 (NHHHQHHNHHHHL) has biased composition (basic residues). The span at 379–414 (SSINGSSTSLSSSSASSSIFSSVAPSTSSSSSLSNG) shows a compositional bias: low complexity. 2 stretches are compositionally biased toward polar residues: residues 429-447 (SKIS…TPLQ) and 484-498 (QQSM…RSPI). Low complexity-rich tracts occupy residues 499 to 532 (NGNQ…NGNN) and 596 to 616 (LNNN…QPQQ). The stretch at 545 to 598 (TRISELELVNDLYRTRIMELEAMEQAARLRENSMKKRLDEVMNLQINYQNLLNN) forms a coiled coil. Over residues 631–667 (DQGSQSISPNVSITGSTTITSPNSRSKIISETTPTHH) the composition is skewed to polar residues.

The protein resides in the nucleus. Its function is as follows. Probable transcription factor involved in response to fluconazole, LiCl, and copper. This chain is Transcriptional regulator GZF3 (GZF3), found in Candida albicans (strain SC5314 / ATCC MYA-2876) (Yeast).